Here is a 350-residue protein sequence, read N- to C-terminus: S-adenosylmethionine:tRNA ribosyltransferase-isomerase (350 aa).

Belongs to the QueA family. In terms of assembly, monomer.

It is found in the cytoplasm. The catalysed reaction is 7-aminomethyl-7-carbaguanosine(34) in tRNA + S-adenosyl-L-methionine = epoxyqueuosine(34) in tRNA + adenine + L-methionine + 2 H(+). It participates in tRNA modification; tRNA-queuosine biosynthesis. Transfers and isomerizes the ribose moiety from AdoMet to the 7-aminomethyl group of 7-deazaguanine (preQ1-tRNA) to give epoxyqueuosine (oQ-tRNA). The polypeptide is S-adenosylmethionine:tRNA ribosyltransferase-isomerase (Vibrio campbellii (strain ATCC BAA-1116)).